A 759-amino-acid polypeptide reads, in one-letter code: Arylphorin subunit C223 (759 aa).

The first 15 residues, 1–15 (MKIAIVLLAIVGLAA), serve as a signal peptide directing secretion.

The protein belongs to the hemocyanin family. Heterohexamer. As to expression, fat body.

The protein resides in the secreted. It localises to the extracellular space. Its function is as follows. Arylphorin is a larval storage protein (LSP) which may serve as a storage protein used primarily as a source of aromatic amino acids for protein synthesis during metamorphosis. It is a constituent of the sclerotizing system of the cuticle, and serves as a carrier for ecdysteroid hormone. This Calliphora vicina (Blue blowfly) protein is Arylphorin subunit C223.